The primary structure comprises 167 residues: uncharacterized protein (167 aa).

Residues 1–21 (MFDFSFPTPASAGTRMGPASC) are disordered.

This is an uncharacterized protein from Homo sapiens (Human).